The sequence spans 462 residues: UDP-N-acetylmuramate--L-alanine ligase (462 aa).

116 to 122 (GAHGKTT) is an ATP binding site.

It belongs to the MurCDEF family.

It localises to the cytoplasm. The catalysed reaction is UDP-N-acetyl-alpha-D-muramate + L-alanine + ATP = UDP-N-acetyl-alpha-D-muramoyl-L-alanine + ADP + phosphate + H(+). It participates in cell wall biogenesis; peptidoglycan biosynthesis. Functionally, cell wall formation. In Desulforamulus reducens (strain ATCC BAA-1160 / DSM 100696 / MI-1) (Desulfotomaculum reducens), this protein is UDP-N-acetylmuramate--L-alanine ligase.